The sequence spans 231 residues: NKG2-C type II integral membrane protein (231 aa).

A compositionally biased stretch (polar residues) spans 1 to 12 (MNKQRGTFSEVS). Residues 1-31 (MNKQRGTFSEVSLAQDPKRQQRKPKDNKSSI) form a disordered region. Residues 1 to 70 (MNKQRGTFSE…CQGLLPPPEK (70 aa)) lie on the Cytoplasmic side of the membrane. Basic and acidic residues predominate over residues 16 to 28 (DPKRQQRKPKDNK). The helical; Signal-anchor for type II membrane protein transmembrane segment at 71 to 93 (LTAEVLGIICIVLMATVLKTVVL) threads the bilayer. The Extracellular segment spans residues 94 to 231 (IPFLEQNNSF…SKRYYCKHKL (138 aa)). N-linked (GlcNAc...) asparagine glycosylation is present at Asn100. In terms of domain architecture, C-type lectin spans 116–229 (HCPEEWITYS…GSSKRYYCKH (114 aa)). Intrachain disulfides connect Cys117–Cys128, Cys145–Cys227, and Cys206–Cys219. Residue Asn149 is glycosylated (N-linked (GlcNAc...) asparagine).

In terms of assembly, heterodimer with KLRD1; disulfide-linked. KLRD1-KLRC2 receptor complex interacts with TYROBP/DAP12 homodimer; this interaction is necessary for the expression on the cell surface. Natural killer cells.

It is found in the cell membrane. In terms of biological role, immune activating receptor involved in self-nonself discrimination. In complex with KLRD1 on cytotoxic lymphocyte subsets, recognizes non-classical major histocompatibility MHC-E loaded with signal sequence-derived peptides from non-classical MHC-G molecules, likely playing a role in the generation and effector functions of adaptive natural killer (NK) cells and in maternal-fetal tolerance during pregnancy. Regulates the effector functions of terminally differentiated cytotoxic lymphocyte subsets, and in particular may play a role in adaptive NK cell response to viral infection. Upon MHC-E-peptide binding, transmits intracellular signals via the adapter protein TYROBP/DAP12, triggering the phosphorylation of proximal signaling molecules and cell activation. The sequence is that of NKG2-C type II integral membrane protein (KLRC2) from Macaca mulatta (Rhesus macaque).